The following is a 104-amino-acid chain: Large ribosomal subunit protein bL21 (104 aa).

This sequence belongs to the bacterial ribosomal protein bL21 family. As to quaternary structure, part of the 50S ribosomal subunit. Contacts protein L20.

Functionally, this protein binds to 23S rRNA in the presence of protein L20. The polypeptide is Large ribosomal subunit protein bL21 (Streptococcus sanguinis (strain SK36)).